The chain runs to 334 residues: Probable prephenate dehydratase (334 aa).

The 218-residue stretch at 7–224 (RVLFLGPKGT…NTTRFLVLKR (218 aa)) folds into the Prephenate dehydratase domain. The region spanning 244 to 322 (LTFTTRQDDP…SDKSKQWCLW (79 aa)) is the ACT domain.

It localises to the cytoplasm. The catalysed reaction is prephenate + H(+) = 3-phenylpyruvate + CO2 + H2O. It participates in amino-acid biosynthesis; L-phenylalanine biosynthesis; phenylpyruvate from prephenate: step 1/1. In terms of biological role, catayzes the decarboxylation/dehydration of prephenate to phenylpyruvate. The protein is Probable prephenate dehydratase (PHA2) of Saccharomyces cerevisiae (strain ATCC 204508 / S288c) (Baker's yeast).